Reading from the N-terminus, the 113-residue chain is Large ribosomal subunit protein eL31A (113 aa).

The protein belongs to the eukaryotic ribosomal protein eL31 family. As to quaternary structure, component of the large ribosomal subunit (LSU). Mature yeast ribosomes consist of a small (40S) and a large (60S) subunit. The 40S small subunit contains 1 molecule of ribosomal RNA (18S rRNA) and 33 different proteins (encoded by 57 genes). The large 60S subunit contains 3 rRNA molecules (25S, 5.8S and 5S rRNA) and 46 different proteins (encoded by 81 genes).

The protein localises to the cytoplasm. Component of the ribosome, a large ribonucleoprotein complex responsible for the synthesis of proteins in the cell. The small ribosomal subunit (SSU) binds messenger RNAs (mRNAs) and translates the encoded message by selecting cognate aminoacyl-transfer RNA (tRNA) molecules. The large subunit (LSU) contains the ribosomal catalytic site termed the peptidyl transferase center (PTC), which catalyzes the formation of peptide bonds, thereby polymerizing the amino acids delivered by tRNAs into a polypeptide chain. The nascent polypeptides leave the ribosome through a tunnel in the LSU and interact with protein factors that function in enzymatic processing, targeting, and the membrane insertion of nascent chains at the exit of the ribosomal tunnel. This is Large ribosomal subunit protein eL31A from Saccharomyces cerevisiae (strain ATCC 204508 / S288c) (Baker's yeast).